Here is a 340-residue protein sequence, read N- to C-terminus: Holliday junction branch migration complex subunit RuvB (340 aa).

Residues 1-184 (MNENLDPTTK…FGISSRLQYY (184 aa)) are large ATPase domain (RuvB-L). Residues leucine 23, arginine 24, glycine 65, lysine 68, threonine 69, threonine 70, 131–133 (EDF), arginine 174, tyrosine 184, and arginine 221 contribute to the ATP site. A Mg(2+)-binding site is contributed by threonine 69. The small ATPAse domain (RuvB-S) stretch occupies residues 185-255 (STELLTTIVE…ISKYALKALN (71 aa)). The segment at 258–340 (AHGLDEMDNK…INTNIQGGLF (83 aa)) is head domain (RuvB-H). Residues arginine 313 and arginine 318 each coordinate DNA.

The protein belongs to the RuvB family. As to quaternary structure, homohexamer. Forms an RuvA(8)-RuvB(12)-Holliday junction (HJ) complex. HJ DNA is sandwiched between 2 RuvA tetramers; dsDNA enters through RuvA and exits via RuvB. An RuvB hexamer assembles on each DNA strand where it exits the tetramer. Each RuvB hexamer is contacted by two RuvA subunits (via domain III) on 2 adjacent RuvB subunits; this complex drives branch migration. In the full resolvosome a probable DNA-RuvA(4)-RuvB(12)-RuvC(2) complex forms which resolves the HJ.

Its subcellular location is the cytoplasm. It carries out the reaction ATP + H2O = ADP + phosphate + H(+). Functionally, the RuvA-RuvB-RuvC complex processes Holliday junction (HJ) DNA during genetic recombination and DNA repair, while the RuvA-RuvB complex plays an important role in the rescue of blocked DNA replication forks via replication fork reversal (RFR). RuvA specifically binds to HJ cruciform DNA, conferring on it an open structure. The RuvB hexamer acts as an ATP-dependent pump, pulling dsDNA into and through the RuvAB complex. RuvB forms 2 homohexamers on either side of HJ DNA bound by 1 or 2 RuvA tetramers; 4 subunits per hexamer contact DNA at a time. Coordinated motions by a converter formed by DNA-disengaged RuvB subunits stimulates ATP hydrolysis and nucleotide exchange. Immobilization of the converter enables RuvB to convert the ATP-contained energy into a lever motion, pulling 2 nucleotides of DNA out of the RuvA tetramer per ATP hydrolyzed, thus driving DNA branch migration. The RuvB motors rotate together with the DNA substrate, which together with the progressing nucleotide cycle form the mechanistic basis for DNA recombination by continuous HJ branch migration. Branch migration allows RuvC to scan DNA until it finds its consensus sequence, where it cleaves and resolves cruciform DNA. This is Holliday junction branch migration complex subunit RuvB from Flavobacterium johnsoniae (strain ATCC 17061 / DSM 2064 / JCM 8514 / BCRC 14874 / CCUG 350202 / NBRC 14942 / NCIMB 11054 / UW101) (Cytophaga johnsonae).